Consider the following 629-residue polypeptide: tRNA uridine 5-carboxymethylaminomethyl modification enzyme MnmG (629 aa).

13–18 (GGGHAG) contacts FAD. 273-287 (GPRYCPSIEDKVVRF) lines the NAD(+) pocket.

Belongs to the MnmG family. As to quaternary structure, homodimer. Heterotetramer of two MnmE and two MnmG subunits. FAD serves as cofactor.

It localises to the cytoplasm. NAD-binding protein involved in the addition of a carboxymethylaminomethyl (cmnm) group at the wobble position (U34) of certain tRNAs, forming tRNA-cmnm(5)s(2)U34. The protein is tRNA uridine 5-carboxymethylaminomethyl modification enzyme MnmG of Alkalilimnicola ehrlichii (strain ATCC BAA-1101 / DSM 17681 / MLHE-1).